The following is a 932-amino-acid chain: Isoleucine--tRNA ligase (932 aa).

The 'HIGH' region motif lies at 58–68 (PYANGDIHIGH). Residue Glu559 coordinates L-isoleucyl-5'-AMP. The 'KMSKS' region motif lies at 600-604 (KMSKS). Lys603 is an ATP binding site. Residues Cys895, Cys898, Cys915, and Cys918 each coordinate Zn(2+).

Belongs to the class-I aminoacyl-tRNA synthetase family. IleS type 1 subfamily. In terms of assembly, monomer. Zn(2+) serves as cofactor.

The protein localises to the cytoplasm. It catalyses the reaction tRNA(Ile) + L-isoleucine + ATP = L-isoleucyl-tRNA(Ile) + AMP + diphosphate. Catalyzes the attachment of isoleucine to tRNA(Ile). As IleRS can inadvertently accommodate and process structurally similar amino acids such as valine, to avoid such errors it has two additional distinct tRNA(Ile)-dependent editing activities. One activity is designated as 'pretransfer' editing and involves the hydrolysis of activated Val-AMP. The other activity is designated 'posttransfer' editing and involves deacylation of mischarged Val-tRNA(Ile). This Saccharophagus degradans (strain 2-40 / ATCC 43961 / DSM 17024) protein is Isoleucine--tRNA ligase.